Here is a 270-residue protein sequence, read N- to C-terminus: Putative postmeiotic segregation increased 2-like protein 11 (270 aa).

The protein belongs to the DNA mismatch repair MutL/HexB family.

This Homo sapiens (Human) protein is Putative postmeiotic segregation increased 2-like protein 11 (PMS2P11).